A 407-amino-acid polypeptide reads, in one-letter code: Tyrosine--tRNA ligase (407 aa).

An L-tyrosine-binding site is contributed by tyrosine 35. The 'HIGH' region motif lies at 40–49; sequence PTADSLHVGH. The L-tyrosine site is built by tyrosine 168 and glutamine 172. The 'KMSKS' region motif lies at 228 to 232; that stretch reads KMGKT. Position 231 (lysine 231) interacts with ATP. Positions 341–405 constitute an S4 RNA-binding domain; sequence NSLVDLLAKC…RGKKNFNRIV (65 aa).

Belongs to the class-I aminoacyl-tRNA synthetase family. TyrS type 1 subfamily. Homodimer.

It is found in the cytoplasm. It carries out the reaction tRNA(Tyr) + L-tyrosine + ATP = L-tyrosyl-tRNA(Tyr) + AMP + diphosphate + H(+). Catalyzes the attachment of tyrosine to tRNA(Tyr) in a two-step reaction: tyrosine is first activated by ATP to form Tyr-AMP and then transferred to the acceptor end of tRNA(Tyr). The sequence is that of Tyrosine--tRNA ligase from Clostridium botulinum (strain Loch Maree / Type A3).